The chain runs to 1948 residues: [F-actin]-monooxygenase MICAL2 (1948 aa).

A monooxygenase domain region spans residues 2–494; the sequence is GENEDEKQAQ…KHLYITKEMD (493 aa). Residues Cys97, 116 to 118, 123 to 125, Phe183, Tyr298, and Asp398 contribute to the FAD site; these read EKR and RNN. The region spanning 516–619 is the Calponin-homology (CH) domain; sequence DIRPNKLLTW…MVMYLSKFYE (104 aa). A Phosphoserine modification is found at Ser631. The Nuclear localization signal motif lies at 660–681; that stretch reads RKRTPRVDAQTEENDVNKRRRQ. 3 disordered regions span residues 664–709, 753–776, and 891–923; these read PRVD…ESGN, SRPP…PPLK, and KRVP…DSVS. The span at 693–709 shows a compositional bias: polar residues; sequence SSRSLGSSQEYAKESGN. Residues 896–917 are compositionally biased toward pro residues; sequence AHPPSPPSCLPSPDPAAAPSPP. The 63-residue stretch at 980 to 1042 folds into the LIM zinc-binding domain; the sequence is DTCYFCKKRV…KLHFAHCKTS (63 aa). Cys982, Cys985, His1003, Cys1006, Cys1009, Cys1012, Cys1032, and His1035 together coordinate Zn(2+). 3 disordered regions span residues 1045–1134, 1146–1185, and 1233–1298; these read QRKR…GQDG, SEDS…QPLT, and QSNS…DDVS. Residues 1050–1059 are compositionally biased toward basic and acidic residues; that stretch reads AELNQQREEE. Over residues 1233–1243 the composition is skewed to polar residues; the sequence is QSNSTPMNQRA. The segment covering 1254 to 1271 has biased composition (low complexity); that stretch reads SSSSSPSLPSSFSSASVP. A compositionally biased stretch (polar residues) spans 1277–1292; sequence DSSSPQVTYNLHSPQI. Residues 1300 to 1339 are interaction with MAPK1; it reads TPIYLRRARAQGITKEIPLYLPHSPMLESTEHCLVSPDGE. Disordered regions lie at residues 1478–1505, 1519–1622, 1672–1726, and 1739–1767; these read QKKA…KSPL, SSEA…SSKV, GDFF…QAGK, and SGPG…QLSS. Positions 1522–1534 are enriched in basic and acidic residues; the sequence is AGKKTSSKPETKT. Over residues 1570–1579 the composition is skewed to low complexity; sequence KASAFFSLAS. The segment covering 1580–1591 has biased composition (polar residues); sequence PTSKAAQASDLS. The span at 1672–1682 shows a compositional bias: basic and acidic residues; it reads GDFFNSPKEKG. Residue Ser1677 is modified to Phosphoserine. Composition is skewed to polar residues over residues 1698–1715 and 1747–1756; these read VDST…TGQD and EDTSSPTSSS. A bMERB domain is found at 1786–1936; the sequence is KQEELKRLHK…ERTQDQHFEN (151 aa).

Belongs to the Mical family. In terms of assembly, interacts with PLXNA4. Interacts with RAB1B. Interacts with MAPK1/ERK2. Interacts with RAB35, RAB8A, RAB10, RAB13 and RAB15 (in their GTP-bound forms); binding to RAB35 is of low affinity compared to other Rab proteins; at least in case of RAB8A may bind 2 molecules of RAB8A simultaneously through a high and a low affinity binding site, respectively. May interact with MAPK1/ERK2. FAD is required as a cofactor.

The protein localises to the nucleus. It localises to the cytoplasm. It carries out the reaction L-methionyl-[F-actin] + NADPH + O2 + H(+) = L-methionyl-(R)-S-oxide-[F-actin] + NADP(+) + H2O. Methionine monooxygenase that promotes depolymerization of F-actin by mediating oxidation of residues 'Met-44' and 'Met-47' on actin to form methionine-sulfoxide, resulting in actin filament disassembly and preventing repolymerization. Regulates the disassembly of branched actin networks also by oxidizing ARP3B-containing ARP2/3 complexes leading to ARP3B dissociation from the network. Acts as a key regulator of the SRF signaling pathway elicited by nerve growth factor and serum: mediates oxidation and subsequent depolymerization of nuclear actin, leading to increase MKL1/MRTF-A presence in the nucleus and promote SRF:MKL1/MRTF-A-dependent gene transcription. Does not activate SRF:MKL1/MRTF-A through RhoA. The polypeptide is [F-actin]-monooxygenase MICAL2 (Rattus norvegicus (Rat)).